Reading from the N-terminus, the 245-residue chain is MKEYFSVKMRASLQGRHVSGAERIVLKEDLPTVISQLSQRPKEYDSLNIKVEKINDLNYIEKSLNVKTINVKDWIEGNKVAVEILQNQGVDKKIAEKYINLIHQGAVNGENMRGAMIVNLSGERVEKDKTRGIRTVNIDFEDRKAITELLKEKGYTERTVDALALATKTLNHPDIVAEYCISDDPSYTTGYVATKTTYYRINPLKQLSNEKGGRIYFVKDTANIEDIYQYLESEAFLIKQLGDLQ.

It belongs to the BioW family. As to quaternary structure, homodimer. The cofactor is Mg(2+).

It carries out the reaction heptanedioate + ATP + CoA = 6-carboxyhexanoyl-CoA + AMP + diphosphate. It functions in the pathway metabolic intermediate metabolism; pimeloyl-CoA biosynthesis; pimeloyl-CoA from pimelate: step 1/1. Its function is as follows. Catalyzes the transformation of pimelate into pimeloyl-CoA with concomitant hydrolysis of ATP to AMP. In Sulfurihydrogenibium azorense (strain DSM 15241 / OCM 825 / Az-Fu1), this protein is 6-carboxyhexanoate--CoA ligase.